We begin with the raw amino-acid sequence, 144 residues long: Granulocyte-macrophage colony-stimulating factor (144 aa).

Positions 1 to 17 are cleaved as a signal peptide; that stretch reads MWLQNLLFLGIVVYSFS. Residue serine 22 is glycosylated (O-linked (GalNAc...) serine). Threonine 27 is a glycosylation site (O-linked (GalNAc...) threonine). 2 disulfide bridges follow: cysteine 71–cysteine 113 and cysteine 105–cysteine 138. Asparagine 86 is a glycosylation site (N-linked (GlcNAc...) asparagine).

This sequence belongs to the GM-CSF family. Monomer. The signaling GM-CSF receptor complex is a dodecamer of two head-to-head hexamers of two alpha, two beta, and two ligand subunits.

Its subcellular location is the secreted. Cytokine that stimulates the growth and differentiation of hematopoietic precursor cells from various lineages, including granulocytes, macrophages, eosinophils and erythrocytes. In Rattus norvegicus (Rat), this protein is Granulocyte-macrophage colony-stimulating factor (Csf2).